A 156-amino-acid polypeptide reads, in one-letter code: Small ribosomal subunit protein uS7 (156 aa).

The protein belongs to the universal ribosomal protein uS7 family. In terms of assembly, part of the 30S ribosomal subunit. Contacts proteins S9 and S11.

Its function is as follows. One of the primary rRNA binding proteins, it binds directly to 16S rRNA where it nucleates assembly of the head domain of the 30S subunit. Is located at the subunit interface close to the decoding center, probably blocks exit of the E-site tRNA. This Mycobacterium tuberculosis (strain CDC 1551 / Oshkosh) protein is Small ribosomal subunit protein uS7.